The following is a 238-amino-acid chain: NADH-quinone oxidoreductase subunit C (238 aa).

The interval 1 to 20 is disordered; the sequence is MSSPDQNPSDAAGQTGSSNE.

Belongs to the complex I 30 kDa subunit family. As to quaternary structure, NDH-1 is composed of 14 different subunits. Subunits NuoB, C, D, E, F, and G constitute the peripheral sector of the complex.

The protein resides in the cell membrane. It catalyses the reaction a quinone + NADH + 5 H(+)(in) = a quinol + NAD(+) + 4 H(+)(out). In terms of biological role, NDH-1 shuttles electrons from NADH, via FMN and iron-sulfur (Fe-S) centers, to quinones in the respiratory chain. The immediate electron acceptor for the enzyme in this species is believed to be a menaquinone. Couples the redox reaction to proton translocation (for every two electrons transferred, four hydrogen ions are translocated across the cytoplasmic membrane), and thus conserves the redox energy in a proton gradient. The sequence is that of NADH-quinone oxidoreductase subunit C from Mycobacterium ulcerans (strain Agy99).